The primary structure comprises 367 residues: tRNA uridine(34) hydroxylase (367 aa).

The Rhodanese domain maps to Glu159–Ser249. Cys213 acts as the Cysteine persulfide intermediate in catalysis.

This sequence belongs to the TrhO family.

It catalyses the reaction uridine(34) in tRNA + AH2 + O2 = 5-hydroxyuridine(34) in tRNA + A + H2O. Functionally, catalyzes oxygen-dependent 5-hydroxyuridine (ho5U) modification at position 34 in tRNAs. In Leptospira borgpetersenii serovar Hardjo-bovis (strain L550), this protein is tRNA uridine(34) hydroxylase.